A 198-amino-acid polypeptide reads, in one-letter code: Ras-like protein 2 (198 aa).

Position 18 to 25 (18 to 25 (GDGGVGKS)) interacts with GTP. Residues 40–48 (YDPTIEDSY) carry the Effector region motif. GTP is bound by residues 65–69 (DTAGQ) and 124–127 (NKCD). C195 carries the cysteine methyl ester modification. C195 is lipidated: S-farnesyl cysteine. The propeptide at 196–198 (IVM) is removed in mature form.

It belongs to the small GTPase superfamily. Ras family.

The protein resides in the cell membrane. The enzyme catalyses GTP + H2O = GDP + phosphate + H(+). Its activity is regulated as follows. Alternates between an inactive form bound to GDP and an active form bound to GTP. Activated by a guanine nucleotide-exchange factor (GEF) and inactivated by a GTPase-activating protein (GAP). This Mucor circinelloides f. lusitanicus (Mucor racemosus var. lusitanicus) protein is Ras-like protein 2 (RAS2).